Here is a 178-residue protein sequence, read N- to C-terminus: MDASNPIVHPIGDHHAVDLEEGPLIVTMKELPGMPGTIGGLALRVGQFLFAAAAIVIMVTGDEFTNYTAFCYLVAAMSLQFLWSFMLAILDTYALLIKRGLRNSVLLSLFVVGDWVTATLSLAAACSTAGVTVLFDNDLNYCGQMHCHRYQLSAAMAFLSWLLIGMSSLLTFWLWASE.

At 1 to 37 the chain is on the cytoplasmic side; that stretch reads MDASNPIVHPIGDHHAVDLEEGPLIVTMKELPGMPGT. Residues 38 to 58 form a helical membrane-spanning segment; that stretch reads IGGLALRVGQFLFAAAAIVIM. The Extracellular segment spans residues 59–69; it reads VTGDEFTNYTA. An N-linked (GlcNAc...) asparagine glycan is attached at N66. The helical transmembrane segment at 70 to 90 threads the bilayer; that stretch reads FCYLVAAMSLQFLWSFMLAIL. At 91–104 the chain is on the cytoplasmic side; sequence DTYALLIKRGLRNS. A helical membrane pass occupies residues 105–125; that stretch reads VLLSLFVVGDWVTATLSLAAA. The Extracellular segment spans residues 126-154; sequence CSTAGVTVLFDNDLNYCGQMHCHRYQLSA. The chain crosses the membrane as a helical span at residues 155–175; it reads AMAFLSWLLIGMSSLLTFWLW. Residues 176 to 178 lie on the Cytoplasmic side of the membrane; the sequence is ASE.

It belongs to the Casparian strip membrane proteins (CASP) family. Homodimer and heterodimers.

The protein resides in the cell membrane. This is CASP-like protein 5B1 from Ginkgo biloba (Ginkgo).